Reading from the N-terminus, the 313-residue chain is 7,8-didemethyl-8-hydroxy-5-deazariboflavin synthase (313 aa).

Residues 4 to 235 enclose the Radical SAM core domain; it reads ITYSPAYTLV…AEITLQIPPN (232 aa). [4Fe-4S] cluster contacts are provided by cysteine 18, cysteine 22, and cysteine 25.

Belongs to the radical SAM superfamily. CofG family. In terms of assembly, consists of two subunits, CofG and CofH. [4Fe-4S] cluster is required as a cofactor.

It catalyses the reaction 5-amino-5-(4-hydroxybenzyl)-6-(D-ribitylimino)-5,6-dihydrouracil + S-adenosyl-L-methionine = 7,8-didemethyl-8-hydroxy-5-deazariboflavin + 5'-deoxyadenosine + L-methionine + NH4(+) + H(+). Its pathway is cofactor biosynthesis; coenzyme F0 biosynthesis. In terms of biological role, catalyzes the radical-mediated synthesis of 7,8-didemethyl-8-hydroxy-5-deazariboflavin from 5-amino-5-(4-hydroxybenzyl)-6-(D-ribitylimino)-5,6-dihydrouracil. This chain is 7,8-didemethyl-8-hydroxy-5-deazariboflavin synthase, found in Synechocystis sp. (strain ATCC 27184 / PCC 6803 / Kazusa).